The primary structure comprises 599 residues: MLCLGWIFLWLVAGERIKGFNISGCSTKKLLWTYSTRSEEEFVLFCDLPEPQKSHFCHRNRLSPKQVPEHLPFMGSNDLSDVQWYQQPSNGDPLEDIRKSYPHIIQDKCTLHFLTPGVNNSGSYICRPKMIKSPYDVACCVKMILEVKPQTNASCEYSASHKQDLLLGSTGSISCPSLSCQSDAQSPAVTWYKNGKLLSVERSNRIVVDEVYDYHQGTYVCDYTQSDTVSSWTVRAVVQVRTIVGDTKLKPDILDPVEDTLEVELGKPLTISCKARFGFERVFNPVIKWYIKDSDLEWEVSVPEAKSIKSTLKDEIIERNIILEKVTQRDLRRKFVCFVQNSIGNTTQSVQLKEKRGVVLLYILLGTIGTLVAVLAASALLYRHWIEIVLLYRTYQSKDQTLGDKKDFDAFVSYAKWSSFPSEATSSLSEEHLALSLFPDVLENKYGYSLCLLERDVAPGGVYAEDIVSIIKRSRRGIFILSPNYVNGPSIFELQAAVNLALDDQTLKLILIKFCYFQEPESLPHLVKKALRVLPTVTWRGLKSVPPNSRFWAKMRYHMPVKNSQGFTWNQLRITSRIFQWKGLSRTETTGRSSQPKEW.

Positions 1–19 (MLCLGWIFLWLVAGERIKG) are cleaved as a signal peptide. Topologically, residues 20-356 (FNISGCSTKK…TQSVQLKEKR (337 aa)) are extracellular. 3 N-linked (GlcNAc...) asparagine glycosylation sites follow: Asn21, Asn119, and Asn152. A disulfide bridge links Cys46 with Cys126. Ig-like C2-type domains are found at residues 149–235 (PQTN…WTVR) and 251–353 (PDIL…VQLK). Disulfide bonds link Cys155/Cys180, Cys175/Cys221, Cys180/Cys221, and Cys273/Cys337. Residue Asn345 is glycosylated (N-linked (GlcNAc...) asparagine). The helical transmembrane segment at 357-377 (GVVLLYILLGTIGTLVAVLAA) threads the bilayer. Over 378-599 (SALLYRHWIE…TGRSSQPKEW (222 aa)) the chain is Cytoplasmic. The TIR domain occupies 406–559 (KDFDAFVSYA…RFWAKMRYHM (154 aa)). Glu493 is a catalytic residue.

The protein belongs to the interleukin-1 receptor family. In terms of assembly, forms a ternary complex with IL18 and IL18R1. Within this complex, IL18R1 is involved in ligand-binding and IL18RAP in signaling leading to NF-kappa-B and JNK activation. In terms of processing, N-glycosylated. Detected in adrenal gland, bone marrow, brain, fetal brain, fetal liver, heart, kidney, lung, liver, peripheral blood leukocytes, placenta, prostate, salivary gland, skeletal muscle, spinal cord, testis, thymus, thyroid, trachea and uterus. Strongly expressed in peripheral blood leukocytes and spleen and, to a lesser extent, in colon. Specifically coexpressed with IL18R1 in T-helper 1 (Th1)cells.

The protein localises to the cell membrane. It catalyses the reaction NAD(+) + H2O = ADP-D-ribose + nicotinamide + H(+). Functionally, within the IL18 receptor complex, does not mediate IL18-binding, but involved in IL18-dependent signal transduction, leading to NF-kappa-B and JNK activation. May play a role in IL18-mediated IFNG synthesis from T-helper 1 (Th1) cells. In Homo sapiens (Human), this protein is Interleukin-18 receptor accessory protein.